Consider the following 539-residue polypeptide: CTP synthase (539 aa).

Residues Met-1–Leu-269 form an amidoligase domain region. Ser-15 is a binding site for CTP. Ser-15 lines the UTP pocket. Residue Ser-16–Ile-21 participates in ATP binding. Tyr-56 contributes to the L-glutamine binding site. Residue Asp-73 participates in ATP binding. Mg(2+) is bound by residues Asp-73 and Glu-143. Residues Asp-150–Glu-152, Lys-190–Gln-195, and Lys-226 contribute to the CTP site. UTP is bound by residues Lys-190–Gln-195 and Lys-226. The 243-residue stretch at Asn-295–Gly-537 folds into the Glutamine amidotransferase type-1 domain. Gly-357 is a binding site for L-glutamine. The Nucleophile; for glutamine hydrolysis role is filled by Cys-384. Residues Leu-385–Gln-388, Glu-408, and Arg-465 each bind L-glutamine. Residues His-510 and Glu-512 contribute to the active site.

It belongs to the CTP synthase family. As to quaternary structure, homotetramer.

The catalysed reaction is UTP + L-glutamine + ATP + H2O = CTP + L-glutamate + ADP + phosphate + 2 H(+). The enzyme catalyses L-glutamine + H2O = L-glutamate + NH4(+). It carries out the reaction UTP + NH4(+) + ATP = CTP + ADP + phosphate + 2 H(+). It functions in the pathway pyrimidine metabolism; CTP biosynthesis via de novo pathway; CTP from UDP: step 2/2. Its activity is regulated as follows. Allosterically activated by GTP, when glutamine is the substrate; GTP has no effect on the reaction when ammonia is the substrate. The allosteric effector GTP functions by stabilizing the protein conformation that binds the tetrahedral intermediate(s) formed during glutamine hydrolysis. Inhibited by the product CTP, via allosteric rather than competitive inhibition. Functionally, catalyzes the ATP-dependent amination of UTP to CTP with either L-glutamine or ammonia as the source of nitrogen. Regulates intracellular CTP levels through interactions with the four ribonucleotide triphosphates. The protein is CTP synthase of Cytophaga hutchinsonii (strain ATCC 33406 / DSM 1761 / CIP 103989 / NBRC 15051 / NCIMB 9469 / D465).